A 192-amino-acid chain; its full sequence is Per os infectivity factor 6 (192 aa).

A helical membrane pass occupies residues 154-174 (IAYVFLFFICIVLLSVLAVFF).

The protein localises to the host membrane. It localises to the virion. The protein resides in the host cytoplasm. Its subcellular location is the host nucleus. In terms of biological role, per os infectivity factor. The sequence is that of Per os infectivity factor 6 (AC68) from Autographa californica nuclear polyhedrosis virus (AcMNPV).